The sequence spans 139 residues: Desampylase (139 aa).

Residues 6–139 enclose the MPN domain; sequence LSLAADARDS…EFRELSVAVE (134 aa). The Proton donor/acceptor role is filled by E31. Zn(2+) contacts are provided by H88, H90, and D101. A JAMM motif motif is present at residues 88–101; that stretch reads HSHPESDPVPSATD.

It belongs to the peptidase M67B family. In terms of assembly, monomer. Requires Zn(2+) as cofactor.

It catalyses the reaction an N(6)-[small archaeal modifier protein]-[protein]-L-lysine + H2O = a [protein]-L-lysine + a [small archaeal modifier protein].. With respect to regulation, inhibited by EDTA and N-ethylmaleimide (NEM) in vitro. Metalloprotease that displays desampylase (DSAMP) activity, cleaving ubiquitin-like small archaeal modifier proteins (SAMP1, SAMP2 and SAMP3) from protein conjugates (isopeptide- and linear-linked). Thus, likely regulates sampylation and the pools of 'free' SAMP available for protein modification. Functions as a specific and not a general protease since it is unable to hydrolyze a variety of unmodified proteins otherwise hydrolyzed by proteinase K. In Haloferax volcanii (strain ATCC 29605 / DSM 3757 / JCM 8879 / NBRC 14742 / NCIMB 2012 / VKM B-1768 / DS2) (Halobacterium volcanii), this protein is Desampylase.